We begin with the raw amino-acid sequence, 1314 residues long: E3 ubiquitin-protein ligase RNF123 (1314 aa).

N-acetylalanine is present on A2. In terms of domain architecture, B30.2/SPRY spans V74–L254. The tract at residues H460–R483 is disordered. A compositionally biased stretch (basic and acidic residues) spans S462 to R483. S675 is subject to Phosphoserine. R683 carries the post-translational modification Asymmetric dimethylarginine. An interaction with NFKB1 region spans residues W968 to W974. Zn(2+) contacts are provided by C1254, C1257, C1269, H1271, C1274, C1277, C1288, and C1291. The RING-type zinc finger occupies C1254 to K1292.

In terms of assembly, component of the KPC complex composed of RNF123/KPC1 and UBAC1/KPC2. Interacts with UBAC1 and CDKN1B via its N-terminal domain. Interacts with RIGI (via N-terminus) and IFIH1 (via N-terminus). In terms of processing, ubiquitinated, leading to its degradation. Deubiquitinated by USP19, thereby stimulating CDKN1B ubiquitin-dependent degradation.

Its subcellular location is the cytoplasm. The catalysed reaction is S-ubiquitinyl-[E2 ubiquitin-conjugating enzyme]-L-cysteine + [acceptor protein]-L-lysine = [E2 ubiquitin-conjugating enzyme]-L-cysteine + N(6)-ubiquitinyl-[acceptor protein]-L-lysine.. It functions in the pathway protein modification; protein ubiquitination. Catalytic subunit of the KPC complex that acts as E3 ubiquitin-protein ligase. Promotes the ubiquitination and proteasome-mediated degradation of CDKN1B which is the cyclin-dependent kinase inhibitor at the G0-G1 transition of the cell cycle. Also acts as a key regulator of the NF-kappa-B signaling by promoting maturation of the NFKB1 component of NF-kappa-B: acts by catalyzing ubiquitination of the NFKB1 p105 precursor, leading to limited proteasomal degradation of NFKB1 p105 and generation of the active NFKB1 p50 subunit. Functions also as an inhibitor of innate antiviral signaling mediated by RIGI and IFIH1 independently of its E3 ligase activity. Interacts with the N-terminal CARD domains of RIGI and IFIH1 and competes with the downstream adapter MAVS. In Mus musculus (Mouse), this protein is E3 ubiquitin-protein ligase RNF123 (Rnf123).